A 398-amino-acid polypeptide reads, in one-letter code: Organelle RRM domain-containing protein 1, chloroplastic (398 aa).

A chloroplast-targeting transit peptide spans 1–88 (MDTALPSVLI…RWVVVMDTPP (88 aa)). Residues 54-70 (LLASSSESPPAQLAAAS) show a composition bias toward low complexity. Residues 54–79 (LLASSSESPPAQLAAASTESQSRSSR) are disordered. The region spanning 299 to 377 (KRLFVTGLSF…WMIVVDVAKT (79 aa)) is the RRM domain.

It localises to the plastid. The protein localises to the chloroplast. In terms of biological role, involved in C-to-U editing of chloroplastic RNA. Functions as major chloroplastic editing factor. Controls a majority of the chloroplastic editing sites. The chain is Organelle RRM domain-containing protein 1, chloroplastic (ORRM1) from Zea mays (Maize).